The sequence spans 322 residues: MLQGHERSITQIKYNREGDLLFSCSKDQKPNVWYSLNGERLGTYDGHQGAVWCLDVDWETRKLITGAGDMTTKIWDVEYGTVIASIAAKSSVRTCNFSFSGNQAAYSTDKAMGQNCELFIIDVRNADSSLSEQAPTLRIPMVESKITSMLWGPLDETIITGHDNGNIAIWDIRKGQKVVDSGSDHTAGINDMQLSKDGTMFVTASKDTTAKLFDSESLMCLKTYKTERPVNSAAISPILDHVVLGGGQDAMEVTTTSTKAGKFDSRFFHLIYEEEFARLKGHFGPINSLAFHPDGKSYASGGEDGFVRVQTFDSTYFENIFE.

WD repeat units follow at residues 4–43 (GHER…RLGT), 46–85 (GHQG…VIAS), 141–180 (MVES…KVVD), 184–223 (DHTA…CLKT), and 281–322 (GHFG…NIFE).

This sequence belongs to the eIF-3 subunit I family. Component of the eukaryotic translation initiation factor 3 (eIF-3) complex. The eIF-3 complex interacts with pix.

Its subcellular location is the cytoplasm. In terms of biological role, component of the eukaryotic translation initiation factor 3 (eIF-3) complex, which is involved in protein synthesis of a specialized repertoire of mRNAs and, together with other initiation factors, stimulates binding of mRNA and methionyl-tRNAi to the 40S ribosome. The eIF-3 complex specifically targets and initiates translation of a subset of mRNAs involved in cell proliferation. The sequence is that of Eukaryotic translation initiation factor 3 subunit I from Drosophila mojavensis (Fruit fly).